The primary structure comprises 147 residues: Holo-[acyl-carrier-protein] synthase (147 aa).

Mg(2+) contacts are provided by Asp-7 and Glu-60.

This sequence belongs to the P-Pant transferase superfamily. AcpS family. Mg(2+) is required as a cofactor.

It localises to the cytoplasm. The enzyme catalyses apo-[ACP] + CoA = holo-[ACP] + adenosine 3',5'-bisphosphate + H(+). Its function is as follows. Transfers the 4'-phosphopantetheine moiety from coenzyme A to a Ser of acyl-carrier-protein. The polypeptide is Holo-[acyl-carrier-protein] synthase (Bifidobacterium animalis subsp. lactis (strain AD011)).